Reading from the N-terminus, the 267-residue chain is 7alpha-hydroxysteroid dehydrogenase (267 aa).

NADP(+)-binding positions include 13-18 (SATRGI), Arg38, 63-64 (DA), and Asn90. The cholate site is built by Ser145 and Tyr158. NADP(+)-binding positions include Tyr158, Lys162, and 191 to 195 (IATDA). Tyr158 functions as the Proton acceptor in the catalytic mechanism.

This sequence belongs to the short-chain dehydrogenases/reductases (SDR) family. As to quaternary structure, homotetramer.

The enzyme catalyses cholate + NADP(+) = 3alpha,12alpha-dihydroxy-7-oxo-5beta-cholanate + NADPH + H(+). It carries out the reaction chenodeoxycholate + NADP(+) = 7-oxolithocholate + NADPH + H(+). Functionally, 7alpha-hydroxysteroid dehydrogenase that catalyzes the NADP(+)-dependent oxidation of the 7alpha-hydroxy group of 7alpha-hydroxysteroids, such as the major human bile acids cholate and chenodeoxycholate, to the corresponding 7-oxosteroids. Is thus liley involved in the metabolism of primary bile acids. The chain is 7alpha-hydroxysteroid dehydrogenase from Paraclostridium sordellii (Clostridium sordellii).